We begin with the raw amino-acid sequence, 406 residues long: MVHCAGCKRPILDRFLLNVLDRAWHVKCVQCCECKCNLTEKCFSREGKLYCKNDFFRCFGTKCAGCAQGISPSDLVRRARSKVFHLNCFTCMMCNKQLSTGEELYIIDENKFVCKEDYLSNSSVAKENSLHSATTGSDPSLSPDSQDPSQDDAKDSESANVSDKEGGSNENDDQNLGAKRRGPRTTIKAKQLETLKAAFAATPKPTRHIREQLAQETGLNMRVIQVWFQNRRSKERRMKQLSALGARRHAFFRSPRRMRPLVDRLEPGELIPNGPFSFYGDYQSEYYGPGGNYDFFPQGPPSSQAQTPVDLPFVPSSGPSGTPLGGLEHPLPGHHPSSEAQRFTDILAHPPGDSPSPEPSLPGPLHSMSAEVFGPSPPFSSLSVNGGASYGNHLSHPPEMNEAAVW.

2 consecutive LIM zinc-binding domains span residues 4 to 54 (CAGC…CKND) and 63 to 117 (CAGC…CKED). 2 disordered regions span residues 128–189 (NSLH…TIKA) and 293–374 (YDFF…EVFG). Over residues 137–148 (SDPSLSPDSQDP) the composition is skewed to low complexity. Residues 151–167 (DDAKDSESANVSDKEGG) are compositionally biased toward basic and acidic residues. S162 bears the Phosphoserine mark. The segment at residues 180–239 (RRGPRTTIKAKQLETLKAAFAATPKPTRHIREQLAQETGLNMRVIQVWFQNRRSKERRMK) is a DNA-binding region (homeobox). Positions 315–327 (PSSGPSGTPLGGL) are enriched in low complexity. A compositionally biased stretch (pro residues) spans 352 to 362 (GDSPSPEPSLP).

As to quaternary structure, interacts with LDB1 via the tandem LIM domains.

The protein localises to the nucleus. Functionally, potential transcription factor. May play a role in early mesoderm formation and later in lateral mesoderm differentiation and neurogenesis. The protein is LIM/homeobox protein Lhx1 (LHX1) of Saimiri boliviensis boliviensis (Bolivian squirrel monkey).